We begin with the raw amino-acid sequence, 220 residues long: MDAPIPTPAPIDLDTWPRRQHFDHYRRRVPCTYAMTVEVDVTAFAAALRRSPRKSYLAQVWALATVVNRHEEFRMCLNSSGDPAVWPVVHPAFTVFNPERETFACLWAPYDPDFGTFHDTAAPLLAEHSRATDFFPQGNPPPNAFDVSSLPWVSFTGFTLDIRDGWDHLAPIFTLGRYTERDTRLLLPLSVQIHHAAADGFHTARLTNELQTLLADPAWL.

Catalysis depends on His195, which acts as the Proton acceptor.

It belongs to the chloramphenicol acetyltransferase family. As to quaternary structure, homotrimer.

The catalysed reaction is chloramphenicol + acetyl-CoA = chloramphenicol 3-acetate + CoA. In terms of biological role, this enzyme is an effector of chloramphenicol resistance in bacteria. The protein is Chloramphenicol acetyltransferase (cat) of Streptomyces acrimycini.